Here is a 161-residue protein sequence, read N- to C-terminus: DNA-binding protein inhibitor ID-4 (161 aa).

In terms of domain architecture, bHLH spans 52–104; that stretch reads AAEAAADEPALCLQCDMNDCYSRLRRLVPTIPPNKKVSKVEILQHVIDYILDL.

Heterodimer with other HLH proteins.

It localises to the nucleus. Functionally, transcriptional regulator (lacking a basic DNA binding domain) which negatively regulates the basic helix-loop-helix (bHLH) transcription factors by forming heterodimers and inhibiting their DNA binding and transcriptional activity. Implicated in regulating a variety of cellular processes, including cellular growth, senescence, differentiation, apoptosis, angiogenesis, and neoplastic transformation. In Mus musculus (Mouse), this protein is DNA-binding protein inhibitor ID-4 (Id4).